The following is a 439-amino-acid chain: Agmatine coumaroyltransferase-1 (439 aa).

Active-site proton acceptor residues include His152 and Asp385.

This sequence belongs to the plant acyltransferase family. As to quaternary structure, monomer.

It carries out the reaction 4-coumaroyl-CoA + agmatine = N-(4-guanidinobutyl)-4-hydroxycinnamamide + CoA + H(+). Its activity is regulated as follows. Inhibited by DEPC. Completely inhibited by ZnSO(4), strongly inhibited by CuSO(4), partially inhibited by MnCl(2). Unaffected by MgCl(2) or CaCl(2). Its function is as follows. Involved in the synthesis of hordatines (antifungal hydroxycinnamoylagmatine derivatives). Specific for agmatine as the acyl acceptor, inactive towards tyramine and putrescine. Has activity with the acyl donors 4-coumaroyl-CoA, cinnamoyl-CoA, caffeoyl-CoA, feruloyl-CoA, and to a lesser extent sinapoyl-CoA. The sequence is that of Agmatine coumaroyltransferase-1 (ACT-1) from Hordeum vulgare (Barley).